Reading from the N-terminus, the 269-residue chain is NAD-capped RNA hydrolase NudC (269 aa).

Arg74 is a substrate binding site. Zn(2+) contacts are provided by Cys103, Cys106, Cys121, and Cys124. Tyr129 contacts substrate. The 124-residue stretch at 130-253 (PRIFPCIIVA…TIARQLIENT (124 aa)) folds into the Nudix hydrolase domain. 3 residues coordinate a divalent metal cation: Ala163, Glu179, and Glu183. Positions 164–185 (GFLEVGETLEQCVAREVKEETG) match the Nudix box motif. Position 197 to 204 (197 to 204 (QPWAFPSS)) interacts with substrate. Position 224 (Glu224) interacts with a divalent metal cation. Ala246 contributes to the substrate binding site.

Belongs to the Nudix hydrolase family. NudC subfamily. In terms of assembly, homodimer. It depends on Mg(2+) as a cofactor. The cofactor is Mn(2+). Zn(2+) is required as a cofactor.

The catalysed reaction is a 5'-end NAD(+)-phospho-ribonucleoside in mRNA + H2O = a 5'-end phospho-adenosine-phospho-ribonucleoside in mRNA + beta-nicotinamide D-ribonucleotide + 2 H(+). It carries out the reaction NAD(+) + H2O = beta-nicotinamide D-ribonucleotide + AMP + 2 H(+). It catalyses the reaction NADH + H2O = reduced beta-nicotinamide D-ribonucleotide + AMP + 2 H(+). Functionally, mRNA decapping enzyme that specifically removes the nicotinamide adenine dinucleotide (NAD) cap from a subset of mRNAs by hydrolyzing the diphosphate linkage to produce nicotinamide mononucleotide (NMN) and 5' monophosphate mRNA. The NAD-cap is present at the 5'-end of some mRNAs and stabilizes RNA against 5'-processing. Has preference for mRNAs with a 5'-end purine. Catalyzes the hydrolysis of a broad range of dinucleotide pyrophosphates. The chain is NAD-capped RNA hydrolase NudC from Vibrio atlanticus (strain LGP32) (Vibrio splendidus (strain Mel32)).